The primary structure comprises 324 residues: S-methyl-5'-thioadenosine phosphorylase (324 aa).

Phosphate is bound by residues serine 14, 57–58, and 90–91; these read RH and SA. Methionine 196 is a substrate binding site. Residue serine 197 participates in phosphate binding. 220–222 provides a ligand contact to substrate; that stretch reads DYD.

This sequence belongs to the PNP/MTAP phosphorylase family. MTAP subfamily. As to quaternary structure, homotrimer.

The protein localises to the cytoplasm. It localises to the nucleus. It catalyses the reaction S-methyl-5'-thioadenosine + phosphate = 5-(methylsulfanyl)-alpha-D-ribose 1-phosphate + adenine. Its pathway is amino-acid biosynthesis; L-methionine biosynthesis via salvage pathway; S-methyl-5-thio-alpha-D-ribose 1-phosphate from S-methyl-5'-thioadenosine (phosphorylase route): step 1/1. Catalyzes the reversible phosphorylation of S-methyl-5'-thioadenosine (MTA) to adenine and 5-methylthioribose-1-phosphate. Involved in the breakdown of MTA, a major by-product of polyamine biosynthesis. Responsible for the first step in the methionine salvage pathway after MTA has been generated from S-adenosylmethionine. Has broad substrate specificity with 6-aminopurine nucleosides as preferred substrates. In Coprinopsis cinerea (strain Okayama-7 / 130 / ATCC MYA-4618 / FGSC 9003) (Inky cap fungus), this protein is S-methyl-5'-thioadenosine phosphorylase.